A 515-amino-acid chain; its full sequence is MTKRVLISVSDKAGIVEFAQELKKLGWEIISTGGTKVALDNAGVDTIAIDDVTGFPEMMDGRVKTLHPNIHGGLLARRDLDSHLEAAKDNKIELIDLVVVNLYPFKETILKPDVTYADAVENIDIGGPSMLRSAAKNHASVTVVVDPADYAVVLDELAANGETSYETRQRLAAKVFRHTAAYDALIAEYFTAQVGESKPEKLTLTYDLKQPMRYGENPQQDADFYQKALPTDYSIASAKQLNGKELSFNNIRDADAAIRIIRDFKDSPTVVALKHMNPCGIGQADDIETAWDYAYESDPVSIFGGIVVLNREVDAATAEKMHGVFLEIIIAPSYTDEALAILINKKKNLRILALPFNAQEASEVEAEYTGVVGGLLVQNQDVVKESPADWQVVTKRQPTETEATALEFAWKAIKYVKSNGIIVTNDHMTLGVGPGQTNRVASVRLAIDQAKDRLDGAVLASDAFFPFADNVEEIAKAGIKAIIQPGGSVRDQESIEAADKYGLTMVFTGVRHFRH.

Positions 1–145 constitute an MGS-like domain; sequence MTKRVLISVS…KNHASVTVVV (145 aa).

This sequence belongs to the PurH family.

It carries out the reaction (6R)-10-formyltetrahydrofolate + 5-amino-1-(5-phospho-beta-D-ribosyl)imidazole-4-carboxamide = 5-formamido-1-(5-phospho-D-ribosyl)imidazole-4-carboxamide + (6S)-5,6,7,8-tetrahydrofolate. It catalyses the reaction IMP + H2O = 5-formamido-1-(5-phospho-D-ribosyl)imidazole-4-carboxamide. It participates in purine metabolism; IMP biosynthesis via de novo pathway; 5-formamido-1-(5-phospho-D-ribosyl)imidazole-4-carboxamide from 5-amino-1-(5-phospho-D-ribosyl)imidazole-4-carboxamide (10-formyl THF route): step 1/1. Its pathway is purine metabolism; IMP biosynthesis via de novo pathway; IMP from 5-formamido-1-(5-phospho-D-ribosyl)imidazole-4-carboxamide: step 1/1. This chain is Bifunctional purine biosynthesis protein PurH, found in Streptococcus pneumoniae (strain Taiwan19F-14).